The sequence spans 36 residues: Photosystem I reaction center subunit VIII (36 aa).

A helical membrane pass occupies residues 9-29; that stretch reads ILVPLVGLIFPALSMALLFIY.

This sequence belongs to the PsaI family.

The protein localises to the plastid. Its subcellular location is the chloroplast thylakoid membrane. May help in the organization of the PsaL subunit. The chain is Photosystem I reaction center subunit VIII from Pyropia yezoensis (Susabi-nori).